A 1202-amino-acid chain; its full sequence is CHD3-type chromatin-remodeling factor CHR7 (1202 aa).

2 consecutive Chromo domains span residues 45–109 (GEIE…HPHL) and 142–201 (KTVD…RDKY). The Helicase ATP-binding domain occupies 237–405 (RYSWSKKTNV…FALMHFLDAD (169 aa)). 250-257 (DEMGLGKT) serves as a coordination point for ATP. Positions 356 to 359 (DEGH) match the DEAH box motif. Residues 528 to 679 (LLDKMMVKLK…HLVVGKQHLC (152 aa)) enclose the Helicase C-terminal domain. The interval 838–872 (TSDEEEEADEPEAARQRKPRTVTRPYRKRARDNSE) is disordered. Residues 853 to 867 (QRKPRTVTRPYRKRA) are compositionally biased toward basic residues.

It belongs to the SNF2/RAD54 helicase family.

The protein resides in the nucleus. In terms of biological role, chromatin remodeling factor that represses the expression of embryonic trait genes upon and after seed germination and thus enables the developmental switch to post-germinative growth. In Arabidopsis thaliana (Mouse-ear cress), this protein is CHD3-type chromatin-remodeling factor CHR7.